Here is a 232-residue protein sequence, read N- to C-terminus: MTEHTDFELLELATPYALNAVSDDERADIDRRVAAAPSPVAAAFNDEVRAVRETMAVVSAATTAEPPAHLRTAILDATKPEVRRQSRWRTAAFASAAAIAVGLGAFGLGVLTRPSPPPTVAEQVLTAPDVRTVSRPLGAGTATVVFSRDRNTGLLVMNNVAPPSRGTVYQMWLLGGAKGPRSAGTMGTAAVTPSTTATLTDLGASTALAFTVEPGTGSPQPTGTILAELPLG.

Topologically, residues 1–90 (MTEHTDFELL…EVRRQSRWRT (90 aa)) are cytoplasmic. Residues 91–111 (AAFASAAAIAVGLGAFGLGVL) traverse the membrane as a helical segment. Topologically, residues 112 to 232 (TRPSPPPTVA…GTILAELPLG (121 aa)) are extracellular.

This sequence belongs to the anti-sigma-K factor family.

The protein localises to the cell membrane. In terms of biological role, an anti-sigma factor for extracytoplasmic function (ECF) sigma factor SigK. ECF sigma factors are held in an inactive form by an anti-sigma factor until released by regulated intramembrane proteolysis (RIP). RIP occurs when an extracytoplasmic signal triggers a concerted proteolytic cascade to transmit information and elicit cellular responses. The membrane-spanning regulatory substrate protein is first cut extracytoplasmically (site-1 protease, S1P), then within the membrane itself (site-2 protease, S2P, Rip1), while cytoplasmic proteases finish degrading the regulatory protein, liberating the sigma factor. In Mycobacterium tuberculosis (strain ATCC 25177 / H37Ra), this protein is Anti-sigma-K factor RskA (rskA).